Reading from the N-terminus, the 575-residue chain is Chaperonin CPN60-2, mitochondrial (575 aa).

The transit peptide at 1–32 (MHRFASGLASKARLARKGANQIASRSSWSRNY) directs the protein to the mitochondrion.

It belongs to the chaperonin (HSP60) family.

Its subcellular location is the mitochondrion. Functionally, implicated in mitochondrial protein import and macromolecular assembly. May facilitate the correct folding of imported proteins. May also prevent misfolding and promote the refolding and proper assembly of unfolded polypeptides generated under stress conditions in the mitochondrial matrix. This chain is Chaperonin CPN60-2, mitochondrial (CPN60-2), found in Cucurbita maxima (Pumpkin).